A 204-amino-acid polypeptide reads, in one-letter code: Leucyl/phenylalanyl-tRNA--protein transferase (204 aa).

Belongs to the L/F-transferase family.

The protein resides in the cytoplasm. It carries out the reaction N-terminal L-lysyl-[protein] + L-leucyl-tRNA(Leu) = N-terminal L-leucyl-L-lysyl-[protein] + tRNA(Leu) + H(+). The catalysed reaction is N-terminal L-arginyl-[protein] + L-leucyl-tRNA(Leu) = N-terminal L-leucyl-L-arginyl-[protein] + tRNA(Leu) + H(+). The enzyme catalyses L-phenylalanyl-tRNA(Phe) + an N-terminal L-alpha-aminoacyl-[protein] = an N-terminal L-phenylalanyl-L-alpha-aminoacyl-[protein] + tRNA(Phe). Functionally, functions in the N-end rule pathway of protein degradation where it conjugates Leu, Phe and, less efficiently, Met from aminoacyl-tRNAs to the N-termini of proteins containing an N-terminal arginine or lysine. The polypeptide is Leucyl/phenylalanyl-tRNA--protein transferase (Sinorhizobium fredii (strain NBRC 101917 / NGR234)).